The following is a 103-amino-acid chain: Large ribosomal subunit protein eL42 (103 aa).

Positions 37 to 56 (GKRRYDRKQSGFGGQTKPVF) are disordered.

This sequence belongs to the eukaryotic ribosomal protein eL42 family.

This is Large ribosomal subunit protein eL42 (rpl36a) from Dictyostelium discoideum (Social amoeba).